The following is an 84-amino-acid chain: Sulfur carrier protein TusA (84 aa).

The Cysteine persulfide intermediate role is filled by Cys21.

It belongs to the sulfur carrier protein TusA family.

It localises to the cytoplasm. Its function is as follows. Sulfur carrier protein which probably makes part of a sulfur-relay system. The sequence is that of Sulfur carrier protein TusA from Pseudomonas savastanoi pv. phaseolicola (strain 1448A / Race 6) (Pseudomonas syringae pv. phaseolicola (strain 1448A / Race 6)).